The sequence spans 231 residues: Adenosylcobinamide-GDP ribazoletransferase (231 aa).

Helical transmembrane passes span 29–49 (ICAY…SMKL), 53–73 (NFLW…LFHF), 101–121 (IGPF…YAFL), 126–146 (IDLI…LHFG), 167–187 (LISL…IISL), and 211–231 (DVLG…LSLI).

The protein belongs to the CobS family. Mg(2+) is required as a cofactor.

Its subcellular location is the cell inner membrane. The enzyme catalyses alpha-ribazole + adenosylcob(III)inamide-GDP = adenosylcob(III)alamin + GMP + H(+). It carries out the reaction alpha-ribazole 5'-phosphate + adenosylcob(III)inamide-GDP = adenosylcob(III)alamin 5'-phosphate + GMP + H(+). It functions in the pathway cofactor biosynthesis; adenosylcobalamin biosynthesis; adenosylcobalamin from cob(II)yrinate a,c-diamide: step 7/7. In terms of biological role, joins adenosylcobinamide-GDP and alpha-ribazole to generate adenosylcobalamin (Ado-cobalamin). Also synthesizes adenosylcobalamin 5'-phosphate from adenosylcobinamide-GDP and alpha-ribazole 5'-phosphate. The sequence is that of Adenosylcobinamide-GDP ribazoletransferase from Kosmotoga olearia (strain ATCC BAA-1733 / DSM 21960 / TBF 19.5.1).